A 370-amino-acid chain; its full sequence is DNA replication and repair protein RecF (370 aa).

Position 30–37 (30–37) interacts with ATP; the sequence is GENAQGKT.

The protein belongs to the RecF family.

It localises to the cytoplasm. The RecF protein is involved in DNA metabolism; it is required for DNA replication and normal SOS inducibility. RecF binds preferentially to single-stranded, linear DNA. It also seems to bind ATP. The polypeptide is DNA replication and repair protein RecF (Bacillus velezensis (strain DSM 23117 / BGSC 10A6 / LMG 26770 / FZB42) (Bacillus amyloliquefaciens subsp. plantarum)).